Consider the following 151-residue polypeptide: UPF0208 membrane protein YfbV (151 aa).

Residues 1-45 are Cytoplasmic-facing; it reads MSTPDNRSVNFFSLFCRGQHYSKTWPLEKRLAPVFVENRVIKMTR. A helical transmembrane segment spans residues 46–65; the sequence is YAIRFMPPIAVFTLCWQIAL. The Periplasmic segment spans residues 66–68; it reads GGQ. Residues 69–91 traverse the membrane as a helical segment; sequence LGPAVATALFALSLPMQGLWWLG. Over 92-151 the chain is Cytoplasmic; it reads KRSVTPLPPAILNWFYEVRGKLQESGQVLAPVEGKPDYQALADTLKRAFKQLDKTFLDDL.

This sequence belongs to the UPF0208 family.

It is found in the cell inner membrane. This chain is UPF0208 membrane protein YfbV (yfbV), found in Escherichia coli O6:H1 (strain CFT073 / ATCC 700928 / UPEC).